The chain runs to 269 residues: Glutamate racemase (269 aa).

Substrate contacts are provided by residues 7 to 8 and 39 to 40; these read DS and YG. Cys-70 functions as the Proton donor/acceptor in the catalytic mechanism. 71–72 contacts substrate; that stretch reads NT. Cys-194 functions as the Proton donor/acceptor in the catalytic mechanism. 195 to 196 contacts substrate; it reads TH.

The protein belongs to the aspartate/glutamate racemases family.

It carries out the reaction L-glutamate = D-glutamate. Its pathway is cell wall biogenesis; peptidoglycan biosynthesis. In terms of biological role, provides the (R)-glutamate required for cell wall biosynthesis. The chain is Glutamate racemase from Ruegeria sp. (strain TM1040) (Silicibacter sp.).